The chain runs to 144 residues: Protection of telomeres protein 1c (144 aa).

This sequence belongs to the telombin family. As to expression, expressed at extremely low levels at the limit of detection.

Its subcellular location is the nucleus. The protein localises to the chromosome. The protein resides in the telomere. Functionally, binds specifically single-stranded telomeric DNA with weak affinity. Has probably no function in the regulation of telomere length. In Arabidopsis thaliana (Mouse-ear cress), this protein is Protection of telomeres protein 1c.